A 142-amino-acid chain; its full sequence is Taurine up-regulated 1 protein (142 aa).

The first 40 residues, 1 to 40 (MARPPPLPGLVGRRSGRAVDRAIGWRLFLLLWHPALGAQA), serve as a signal peptide directing secretion. Topologically, residues 41–123 (RPPRRAPGGR…ARTQLEGQEG (83 aa)) are extracellular. A helical transmembrane segment spans residues 124 to 140 (AGGWLVVGFLLCLFLLM). Residues 141 to 142 (PP) lie on the Cytoplasmic side of the membrane.

Widely expressed in the adult with highest levels in placenta and testis. Also expressed in a number of embryonic tissues at multiple embryonic stages.

It localises to the nucleus membrane. The protein resides in the mitochondrion membrane. Its subcellular location is the cytoplasm. The polypeptide is Taurine up-regulated 1 protein (Mus musculus (Mouse)).